We begin with the raw amino-acid sequence, 240 residues long: Proteasome subunit alpha (240 aa).

The protein belongs to the peptidase T1A family. The 20S proteasome core is composed of 14 alpha and 14 beta subunits that assemble into four stacked heptameric rings, resulting in a barrel-shaped structure. The two inner rings, each composed of seven catalytic beta subunits, are sandwiched by two outer rings, each composed of seven alpha subunits. The catalytic chamber with the active sites is on the inside of the barrel. Has a gated structure, the ends of the cylinder being occluded by the N-termini of the alpha-subunits. Is capped by the proteasome-associated ATPase, ARC.

It is found in the cytoplasm. It participates in protein degradation; proteasomal Pup-dependent pathway. Its activity is regulated as follows. The formation of the proteasomal ATPase ARC-20S proteasome complex, likely via the docking of the C-termini of ARC into the intersubunit pockets in the alpha-rings, may trigger opening of the gate for substrate entry. Interconversion between the open-gate and close-gate conformations leads to a dynamic regulation of the 20S proteasome proteolysis activity. In terms of biological role, component of the proteasome core, a large protease complex with broad specificity involved in protein degradation. The sequence is that of Proteasome subunit alpha from Frankia casuarinae (strain DSM 45818 / CECT 9043 / HFP020203 / CcI3).